A 78-amino-acid chain; its full sequence is Small integral membrane protein 1 (78 aa).

Met-1 carries the post-translational modification N-acetylmethionine. The span at 1–18 shows a compositional bias: basic and acidic residues; it reads MQPQESHVHYSRWEDGSR. Residues 1–20 are disordered; sequence MQPQESHVHYSRWEDGSRDG. The Cytoplasmic portion of the chain corresponds to 1–46; that stretch reads MQPQESHVHYSRWEDGSRDGVSLGAVSSTEEASRCRRISQRLCTGK. Phosphoserine occurs at positions 6, 17, 22, and 27. Residues 47–67 traverse the membrane as a helical; Signal-anchor for type II membrane protein segment; it reads LGIAMKVLGGVALFWIIFILG. At 68–78 the chain is on the extracellular side; it reads YLTGYYVHKCK. The segment at 68–78 is displays the Vel antigen; sequence YLTGYYVHKCK.

This sequence belongs to the SMIM1 family. In terms of assembly, homooligomer; disulfide-linked. Highly expressed in the bone marrow and expressed at lower levels in non-hematopoietic tissues. Highly expressed in erythroleukemia cell lines. Up-regulated in CD34+ hematopoietic progenitors cultured toward red blood cells.

It localises to the cell membrane. Its function is as follows. Regulator of red blood cell formation. This chain is Small integral membrane protein 1, found in Homo sapiens (Human).